Reading from the N-terminus, the 549-residue chain is MKLALVLSLIVSVAAAPTATLANGDTITGLNAIINEAFLGIPFAQPPVGNLRFKPPVPYSASLNGQKFTSYGPSCMQMNPLGNWDSSLPKAAINSLMQSKLFQAVLPNGEDCLTINVVRPSGTKPGANLPVMVWIFGGGFEVGGSSLFPPAQMITASVLMGKPIIHVSMNYRVASWGFLAGPDIKAEGSGNAGLHDQRLGLQWVADNIAGFGGDPSKVTIFGESAGSMSVMCQLLWNDGDNTYNGKPLFRAAIMQSGAMVPSDPVDGPYGTQIYDQVVASAGCGSASDKLACLRSISNDKLFQATSDTPGALAYPSLRLSFLPRPDGTFITDDMFKLVRDGKCANVPVIIGDQNDEGTVFALSSLNVTTDAQARQYFKESFIHASDAEIDTLMAAYPSDITQGSPFDTGIFNAITPQFKRIAAVLGDLAFTLPRRYFLNHFQGGTKYSFLSKQLSGLPVIGTHHANDIVWQDFLVSHSSAVYNNAFIAFANDLDPNKAGLLVNWPKYTSSSQSGNNLLQINALGLYTGKDNFRTAGYDALFTNPSSFFV.

Residues 1 to 15 form the signal peptide; sequence MKLALVLSLIVSVAA. C75 and C112 form a disulfide bridge. Catalysis depends on S224, which acts as the Acyl-ester intermediate. An intrachain disulfide couples C283 to C292. The active-site Charge relay system is E356. An N-linked (GlcNAc...) asparagine glycan is attached at N366. H464 serves as the catalytic Charge relay system.

It belongs to the type-B carboxylesterase/lipase family.

The enzyme catalyses a triacylglycerol + H2O = a diacylglycerol + a fatty acid + H(+). The chain is Lipase 4 (LIP4) from Diutina rugosa (Yeast).